A 152-amino-acid chain; its full sequence is MFRGASAINLDTKGRIAIPVRYREPLQLEHQGRIVITVDIQSACLLLYPIHEWELIEAKLLKLSDTDKTQRSLKRLLLGYAHEVELDGNGRILLPPPLRQYANLDKRIMLVGQLNKFELWDEQAWLQQIDECQETIRSEELANNERLADFSL.

2 SpoVT-AbrB domains span residues Ala5–Glu52 and Ala81–Ala124.

The protein belongs to the MraZ family. Forms oligomers.

The protein localises to the cytoplasm. It localises to the nucleoid. This is Transcriptional regulator MraZ from Shewanella putrefaciens (strain CN-32 / ATCC BAA-453).